We begin with the raw amino-acid sequence, 74 residues long: Cecropin-P3 (74 aa).

The first 13 residues, 1 to 13, serve as a signal peptide directing secretion; that stretch reads MFLIYLLVQTAES. The propeptide at 45-74 is removed in mature form; it reads RRRSVGEEDAIPSHIEVNKFFLRKPAKEHI.

The protein belongs to the cecropin family. In terms of tissue distribution, expressed in the body wall, intestine, uterus and ovary.

The protein resides in the secreted. In terms of biological role, has antibacterial activity against several Gram-positive and Gram-negative bacteria. Is weakly active against yeasts. Acts by a nonpore mechanism. The sequence is that of Cecropin-P3 (ASCEC-3) from Ascaris suum (Pig roundworm).